The primary structure comprises 122 residues: Ribosome-binding factor A (122 aa).

The protein belongs to the RbfA family. Monomer. Binds 30S ribosomal subunits, but not 50S ribosomal subunits or 70S ribosomes.

Its subcellular location is the cytoplasm. Functionally, one of several proteins that assist in the late maturation steps of the functional core of the 30S ribosomal subunit. Associates with free 30S ribosomal subunits (but not with 30S subunits that are part of 70S ribosomes or polysomes). Required for efficient processing of 16S rRNA. May interact with the 5'-terminal helix region of 16S rRNA. In Polynucleobacter necessarius subsp. necessarius (strain STIR1), this protein is Ribosome-binding factor A.